A 177-amino-acid chain; its full sequence is Phycocyanin PC645 beta subunit (177 aa).

Tyr-18 is a binding site for mesobiliverdin. Residues Lys-28, Asn-35, and Asp-39 each coordinate (2R,3E)-phycocyanobilin. 15,16-dihydrobiliverdin is bound by residues Cys-50, Asp-54, and Cys-61. (2R,3E)-phycocyanobilin is bound by residues Asn-72, Arg-77, Cys-82, Arg-84, and Asp-85. 15,16-dihydrobiliverdin is bound at residue Gln-148. 3 residues coordinate (2R,3E)-phycocyanobilin: Pro-154, Gly-156, and Cys-158.

It belongs to the phycobiliprotein family. As to quaternary structure, heterotetramer of 2 different alpha chains and 2 identical beta chains which form 2 alpha-beta heterodimers within the heterotetramer. In terms of processing, contains two phycocyanobilin chromophores, one mesobiliverdin chromophore and one 15,16-dihydrobiliverdin chromophore with binding mediated by both the alpha and beta subunits.

The protein localises to the plastid. Its subcellular location is the chloroplast thylakoid membrane. Its function is as follows. Light-harvesting photosynthetic tetrapyrrole chromophore-protein from the phycobiliprotein complex. The sequence is that of Phycocyanin PC645 beta subunit from Chroomonas sp. (strain CCMP270).